The sequence spans 442 residues: 23S rRNA (uracil(1939)-C(5))-methyltransferase RlmD (442 aa).

Positions 10-75 constitute a TRAM domain; that stretch reads AKQTAKNCCK…RQYGRAKANK (66 aa). 4 residues coordinate [4Fe-4S] cluster: C88, C94, C97, and C173. S-adenosyl-L-methionine is bound by residues Q276, F305, N310, E326, N353, and D374. The active-site Nucleophile is C400.

It belongs to the class I-like SAM-binding methyltransferase superfamily. RNA M5U methyltransferase family. RlmD subfamily.

The enzyme catalyses uridine(1939) in 23S rRNA + S-adenosyl-L-methionine = 5-methyluridine(1939) in 23S rRNA + S-adenosyl-L-homocysteine + H(+). Its function is as follows. Catalyzes the formation of 5-methyl-uridine at position 1939 (m5U1939) in 23S rRNA. In Haemophilus ducreyi (strain 35000HP / ATCC 700724), this protein is 23S rRNA (uracil(1939)-C(5))-methyltransferase RlmD.